We begin with the raw amino-acid sequence, 309 residues long: Elongation factor Ts (309 aa).

Positions 82-85 are involved in Mg(2+) ion dislocation from EF-Tu; it reads TDFV.

It belongs to the EF-Ts family.

It localises to the cytoplasm. In terms of biological role, associates with the EF-Tu.GDP complex and induces the exchange of GDP to GTP. It remains bound to the aminoacyl-tRNA.EF-Tu.GTP complex up to the GTP hydrolysis stage on the ribosome. This chain is Elongation factor Ts, found in Rickettsia akari (strain Hartford).